The chain runs to 279 residues: Release factor glutamine methyltransferase (279 aa).

Residues 118-122 (GTGSG), Asp-141, and Asn-182 contribute to the S-adenosyl-L-methionine site. 182-185 (NPPY) is a binding site for substrate.

This sequence belongs to the protein N5-glutamine methyltransferase family. PrmC subfamily.

The catalysed reaction is L-glutaminyl-[peptide chain release factor] + S-adenosyl-L-methionine = N(5)-methyl-L-glutaminyl-[peptide chain release factor] + S-adenosyl-L-homocysteine + H(+). Its function is as follows. Methylates the class 1 translation termination release factors RF1/PrfA and RF2/PrfB on the glutamine residue of the universally conserved GGQ motif. In Streptococcus pneumoniae (strain ATCC BAA-255 / R6), this protein is Release factor glutamine methyltransferase.